A 640-amino-acid chain; its full sequence is Isoniazid-induced protein IniA (640 aa).

The chain crosses the membrane as a helical span at residues 497–519 (IGMLSSVVGLGLFNPLSVGAGLI). A coiled-coil region spans residues 560 to 628 (RDRLKMIQRL…QVNDNLAGLE (69 aa)).

As to quaternary structure, forms multimeric structures containing a central pore.

Its subcellular location is the cell membrane. Functionally, participates in the development of tolerance to both isoniazid and ethambutol. May function through a MDR-pump like mechanism, although it does not appear to directly transport isoniazid from the cell. The polypeptide is Isoniazid-induced protein IniA (iniA) (Mycobacterium tuberculosis (strain CDC 1551 / Oshkosh)).